The chain runs to 317 residues: Tyrosine--tRNA ligase (317 aa).

Tyrosine 33 is an L-tyrosine binding site. The 'HIGH' region signature appears at 38–46; the sequence is PSGKIHMGH. Residues tyrosine 155, glutamine 159, aspartate 162, and glutamine 177 each contribute to the L-tyrosine site. Residues 211–215 carry the 'KMSKS' region motif; the sequence is KMASS. Serine 214 provides a ligand contact to ATP.

It belongs to the class-I aminoacyl-tRNA synthetase family. TyrS type 3 subfamily. In terms of assembly, homodimer.

The protein resides in the cytoplasm. The catalysed reaction is tRNA(Tyr) + L-tyrosine + ATP = L-tyrosyl-tRNA(Tyr) + AMP + diphosphate + H(+). Its function is as follows. Catalyzes the attachment of tyrosine to tRNA(Tyr) in a two-step reaction: tyrosine is first activated by ATP to form Tyr-AMP and then transferred to the acceptor end of tRNA(Tyr). The chain is Tyrosine--tRNA ligase from Methanosarcina barkeri (strain Fusaro / DSM 804).